Consider the following 370-residue polypeptide: Serine/threonine-protein kinase RIM11/MSD1 (370 aa).

The region spanning 39–322 (FPTTEVVGHG…ALQCLCSPYF (284 aa)) is the Protein kinase domain. Residues 45 to 53 (VGHGSFGVV) and lysine 68 contribute to the ATP site. Aspartate 164 serves as the catalytic Proton acceptor. Phosphotyrosine is present on tyrosine 199.

Belongs to the protein kinase superfamily. CMGC Ser/Thr protein kinase family. GSK-3 subfamily. In terms of assembly, interacts with TDA1.

The catalysed reaction is L-seryl-[protein] + ATP = O-phospho-L-seryl-[protein] + ADP + H(+). It carries out the reaction L-threonyl-[protein] + ATP = O-phospho-L-threonyl-[protein] + ADP + H(+). Serine/threonine protein kinase that is thought to function in regulating kinetochore activity and entry into meiosis. Could phosphorylate IME1. The protein is Serine/threonine-protein kinase RIM11/MSD1 (RIM11) of Saccharomyces cerevisiae (strain ATCC 204508 / S288c) (Baker's yeast).